Reading from the N-terminus, the 2444-residue chain is MAADIEQVFRSFVVSKFREIQQELSSGRSEGQLNGETNPPIEGNQAGDTAASARSLPNEEIVQKIEEVLSGVLDTELRYKPDLKEASRKSRCVSVQTDPTDEVPTKKSKKHKKHKNKKKKKKKEKEKKYKRQPEESESKLKSHHDGNLESDSFLKFDSEPSAAALEHPVRAFGLSEASETALVLEPPVVSMEVQESHVLETLKPATKAAELSVVSTSVISEQSEQPMPGMLEPSMTKILDSFTAAPVPMSTAALKSPEPVVTMSVEYQKSVLKSLETMPPETSKTTLVELPIAKVVEPSETLTIVSETPTEVHPEPSPSTMDFPESSTTDVQRLPEQPVEAPSEIADSSMTRPQESLELPKTTAVELQESTVASALELPGPPATSILELQGPPVTPVPELPGPSATPVPELSGPLSTPVPELPGPPATVVPELPGPSVTPVPQLSQELPGPPAPSMGLEPPQEVPEPPVMAQELSGVPAVSAAIELTGQPAVTVAMELTEQPVTTTEFEQPVAMTTVEHPGHPEVTTATGLLGQPEAAMVLELPGQPVATTALELSGQPSVTGVPELSGLPSATRALELSGQSVATGALELPGQLMATGALEFSGQSGAAGALELLGQPLATGVLELPGQPGAPELPGQPVATVALEISVQSVVTTSELSTMTVSQSLEVPSTTALESYNTVAQELPTTLVGETSVTVGVDPLMAQESHMLASNTMETHMLASNTMDSQMLASNTMDSQMLASNTMDSQMLASSTMDSQMLASSTMDSQMLATSTMDSQMLATSSMDSQMLATSSMDSQMLATSSMDSQMLATSSMDSQMLATSSMDSQMLATSSMDSQMLATSSMDSQMLATSSMDSQMLASGAMDSQMLASGTMDAQMLASGTMDAQMLASSTQDSAMMGSKSPDPYRLAQDPYRLAQDPYRLGHDPYRLGHDAYRLGQDPYRLGHDPYRLTPDPYRVSPRPYRIAPRSYRIAPRPYRLAPRPLMLASRRSMMMSYAAERSMMSSYERSMMSYERSMMSPMAERSMMSAYERSMMSAYERSMMSPMAERSMMSAYERSMMSAYERSMMSPMADRSMMSMGADRSMMSSYSAADRSMMSSYSAADRSMMSSYTDRSMMSMAADSYTDSYTDSYTEAYMVPPLPPEEPPTMPPLPPEEPPMTPPLPPEEPPEGPALSTEQSALTADNTWSTEVTLSTGESLSQPEPPVSQSEISEPMAVPANYSMSESETSMLASEAVMTVPEPAREPESSVTSAPVESAVVAEHEMVPERPMTYMVSETTMSVEPAVLTSEASVISETSETYDSMRPSGHAISEVTMSLLEPAVTISQPAENSLELPSMTVPAPSTMTTTESPVVAVTEIPPVAVPEPPIMAVPELPTMAVVKTPAVAVPEPLVAAPEPPTMATPELCSLSVSEPPVAVSELPALADPEHAITAVSGVSSLEPSVPILEPAVSVLQPVMIVSEPSVPVQEPTVAVSEPAVIVSEHTQITSPEMAVESSPVIVDSSVMSSQIMKGMNLLGGDENLGPEVGMQETLLHPGEEPRDGGHLKSDLYENEYDRNADLTVNSHLIVKDAEHNTVCATTVGPVGEASEEKILPISETKEITELATCAAVSEADIGRSLSSQLALELDTVGTSKGFEFVTASALISESKYDVEVSVTTQDTEHDMVISTSPSGGSEADIEGPLPAKDIHLDLPSTNFVCKDVEDSLPIKESAQAVAVALSPKESSEDTEVPLPNKEIVPESGYSASIDEINEADLVRPLLPKDMERLTSLRAGIEGPLLASEVERDKSAASPVVISIPERASESSSEEKDDYEIFVKVKDTHEKSKKNKNRDKGEKEKKRDSSLRSRSKRSKSSEHKSRKRTSESRSRARKRSSKSKSHRSQTRSRSRSRRRRRSSRSRSKSRGRRSVSKEKRKRSPKHRSKSRERKRKRSSSRDNRKAARARSRTPSRRSRSHTPSRRRRSRSVGRRRSFSISPSRRSRTPSRRSRTPSRRSRTPSRRSRTPSRRSRTPSRRRRSRSAVRRRSFSISPVRLRRSRTPLRRRFSRSPIRRKRSRSSERGRSPKRLTDLDKAQLLEIAKANAAAMCAKAGVPLPPNLKPAPPPTIEEKVAKKSGGATIEELTEKCKQIAQSKEDDDVIVNKPHVSDEEEEEPPFYHHPFKLSEPKPIFFNLNIAAAKPTPPKSQVTLTKEFPVSSGSQHRKKEADSVYGEWVPVEKNGEESKDDDNVFSSSLPSEPVDISTAMSERALAQKRLSENAFDLEAMSMLNRAQERIDAWAQLNSIPGQFTGSTGVQVLTQEQLANTGAQAWIKKDQFLRAAPVTGGMGAVLMRKMGWREGEGLGKNKEGNKEPILVDFKTDRKGLVAVGERAQKRSGNFSAAMKDLSGKHPVSALMEICNKRRWQPPEFLLVHDSGPDHRKHFLFRVLRNGSPYQPNCMFFLNRY.

An N-acetylalanine modification is found at A2. Residue K16 is modified to N6-acetyllysine. The span at 23-37 shows a compositional bias: polar residues; the sequence is ELSSGRSEGQLNGET. Positions 23–58 are disordered; that stretch reads ELSSGRSEGQLNGETNPPIEGNQAGDTAASARSLPN. Residue K64 forms a Glycyl lysine isopeptide (Lys-Gly) (interchain with G-Cter in SUMO2) linkage. Positions 79–88 are enriched in basic and acidic residues; the sequence is YKPDLKEASR. The tract at residues 79-155 is disordered; it reads YKPDLKEASR…GNLESDSFLK (77 aa). The residue at position 94 (S94) is a Phosphoserine. Residues 106–130 show a composition bias toward basic residues; sequence KKSKKHKKHKNKKKKKKKEKEKKYK. The segment covering 131–155 has biased composition (basic and acidic residues); the sequence is RQPEESESKLKSHHDGNLESDSFLK. A phosphoserine mark is found at S142, S150, S152, and S158. K284 bears the N6-acetyllysine mark. 2 disordered regions span residues 301 to 358 and 391 to 468; these read TLTI…ESLE and GPPV…PEPP. Composition is skewed to pro residues over residues 393 to 406 and 420 to 439; these read PVTP…PSAT and PELP…PSVT. T395 bears the Phosphothreonine mark. A 13 X 10 AA tandem repeats of L-A-[ST]-[NSG]-[TS]-MDSQM region spans residues 721–850; sequence LASNTMDSQM…LATSSMDSQM (130 aa). The segment at 907–983 is 11 X 7 AA tandem repeats of [DR]-P-Y-R-[LI][AG][QHP]; it reads DPYRLAQDPY…IAPRPYRLAP (77 aa). An Omega-N-methylarginine modification is found at R945. Residue T954 is modified to Phosphothreonine. At S993 the chain carries Phosphoserine. 14 consecutive repeat copies span residues 1001 to 1006, 1009 to 1014, 1016 to 1021, 1025 to 1030, 1033 to 1038, 1041 to 1046, 1050 to 1055, 1058 to 1063, 1066 to 1071, 1075 to 1080, 1084 to 1089, 1095 to 1100, 1106 to 1111, and 1115 to 1120. The segment at 1001 to 1120 is 14 X 6 AA repeats of [ED]-R-S-M-M-S; it reads ERSMMSSYER…SSYTDRSMMS (120 aa). Residue R1002 is modified to Asymmetric dimethylarginine. At R1017 the chain carries Asymmetric dimethylarginine. A phosphoserine mark is found at S1030 and S1038. 2 positions are modified to phosphoserine: S1055 and S1063. Phosphoserine is present on S1077. A compositionally biased stretch (pro residues) spans 1141 to 1168; it reads PPLPPEEPPTMPPLPPEEPPMTPPLPPE. The tract at residues 1141–1173 is 3 X 11 AA tandem repats of P-P-L-P-P-E-E-P-P-[TME]-[MTG]; it reads PPLPPEEPPTMPPLPPEEPPMTPPLPPEEPPEG. Residues 1141–1213 form a disordered region; the sequence is PPLPPEEPPT…PEPPVSQSEI (73 aa). The segment covering 1177–1213 has biased composition (polar residues); that stretch reads STEQSALTADNTWSTEVTLSTGESLSQPEPPVSQSEI. Phosphoserine occurs at positions 1678, 1723, 1727, 1772, 1784, 1791, 1794, 1807, and 1808. The disordered stretch occupies residues 1802-2072; that stretch reads ERASESSSEE…RSPKRLTDLD (271 aa). Composition is skewed to basic and acidic residues over residues 1815–1826, 1834–1847, and 1855–1870; these read YEIFVKVKDTHE, RDKG…DSSL, and KSSE…ESRS. 2 stretches are compositionally biased toward basic residues: residues 1871–1934 and 1942–1973; these read RARK…RKRS and AARA…RRRS. 7 tandem repeats follow at residues 1950-1956, 1959-1977, 1978-1984, 1985-1991, 1992-1998, 1999-2005, and 2006-2012. The 7 X 7 AA repeats of P-S-R-R-S-R-[TS] stretch occupies residues 1950 to 2019; it reads PSRRSRSHTP…SRTPSRRRRS (70 aa). The tract at residues 1959-2030 is 2 X 19 AA repeats of P-S-R-R-R-R-S-R-S-V-V-R-R-R-S-F-S-I-S; that stretch reads PSRRRRSRSV…SAVRRRSFSI (72 aa). Phosphoserine occurs at positions 1973, 1975, and 1977. Residues 1980–2027 are compositionally biased toward basic residues; that stretch reads RRSRTPSRRSRTPSRRSRTPSRRSRTPSRRSRTPSRRRRSRSAVRRRS. One copy of the 2-7; approximate repeat lies at 2013–2019; it reads PSRRRRS. The stretch at 2020–2030 is one 3-2; approximate repeat; the sequence is RSAVRRRSFSI. 5 positions are modified to phosphoserine: S2027, S2029, S2031, S2047, and S2049. The segment at 2031 to 2057 is 3 X tandem repeats of [ST]-P-[VLI]-R-[RL]-[RK]-[RF]-S-R; it reads SPVRLRRSRTPLRRRFSRSPIRRKRSR. Basic residues predominate over residues 2034-2056; that stretch reads RLRRSRTPLRRRFSRSPIRRKRS. The segment covering 2057 to 2072 has biased composition (basic and acidic residues); sequence RSSERGRSPKRLTDLD. Residue K2073 is modified to N6-acetyllysine; alternate. A Glycyl lysine isopeptide (Lys-Gly) (interchain with G-Cter in SUMO2); alternate cross-link involves residue K2073. K2110 is covalently cross-linked (Glycyl lysine isopeptide (Lys-Gly) (interchain with G-Cter in SUMO2)). The residue at position 2147 (S2147) is a Phosphoserine. K2167 participates in a covalent cross-link: Glycyl lysine isopeptide (Lys-Gly) (interchain with G-Cter in SUMO2). A Phosphothreonine modification is found at T2181. Residues 2192–2238 are disordered; it reads EFPVSSGSQHRKKEADSVYGEWVPVEKNGEESKDDDNVFSSSLPSEP. S2256 carries the post-translational modification Phosphoserine. One can recognise a G-patch domain in the interval 2323 to 2369; sequence TGGMGAVLMRKMGWREGEGLGKNKEGNKEPILVDFKTDRKGLVAVGE. Residues 2389–2444 enclose the DRBM domain; sequence HPVSALMEICNKRRWQPPEFLLVHDSGPDHRKHFLFRVLRNGSPYQPNCMFFLNRY.

In terms of assembly, interacts with SRSF2. Associates with the spliceosome. Interacts with USH1G. As to expression, widely expressed. Highly expressed in brain, heart, spleen, liver, skeletal muscle, kidney and testis.

It localises to the nucleus speckle. Functionally, RNA-binding protein that acts as a mRNA splicing cofactor by promoting efficient splicing of transcripts that possess weak splice sites. Specifically promotes splicing of many cell-cycle and DNA-repair transcripts that possess weak splice sites, such as TUBG1, KATNB1, TUBGCP2, AURKB, PCNT, AKT1, RAD23A, and FANCG. Probably acts by facilitating the interaction between Serine/arginine-rich proteins such as SRSF2 and the RNA polymerase II. Also binds to DNA; binds to the consensus DNA sequence: 5'-GA[GT]AN[CG][AG]CC-3'. Essential for correct RNA splicing of multiple genes critical for brain development, neuronal migration and metabolism, including TUBG1, FLNA, PNKP, WDR62, PSMD3, PCK2, PFKL, IDH2, and ACY1. May also regulate the ghrelin signaling in hypothalamic neuron by acting as a negative regulator of GHSR expression. The polypeptide is Protein SON (Son) (Mus musculus (Mouse)).